Consider the following 318-residue polypeptide: Peroxisomal targeting signal 2 receptor (318 aa).

WD repeat units lie at residues 60–91 (DWND…QLWD), 104–136 (EHTQ…KVWD), 148–179 (GHES…RIWD), 191–222 (AHQT…RGWD), 235–266 (GHTY…RFWN), and 279–310 (HHTE…KIYD).

Belongs to the WD repeat peroxin-7 family. In terms of assembly, interacts with PEX5; interaction only takes place when PEX7 is associated with cargo proteins. Interacts with VWA8.

Its subcellular location is the cytoplasm. It localises to the cytosol. It is found in the peroxisome matrix. Receptor required for the peroxisomal import of proteins containing a C-terminal PTS2-type peroxisomal targeting signal. Specifically binds to cargo proteins containing a PTS2 peroxisomal targeting signal in the cytosol. Cargo protein-binding triggers interaction with PEX5 and formation of a ternary complex composed of PEX5 and PEX7 along with PTS2-containing cargo proteins, which is tranlocated into peroxisomes by passing through the PEX13-PEX14 docking complex. This is Peroxisomal targeting signal 2 receptor from Mus musculus (Mouse).